A 178-amino-acid chain; its full sequence is Putative adenylate kinase (178 aa).

5 residues coordinate ATP: G10, G12, K13, S14, and S15. Residues 29–50 form an NMP region; sequence TVVELAEKHGCIIDEEDGEIVI. An LID region spans residues 94 to 104; it reads GRNWSEEKLLE. Residue R95 coordinates ATP.

The protein belongs to the adenylate kinase family. AK6 subfamily. As to quaternary structure, interacts with uS11. Not a structural component of 40S pre-ribosomes, but transiently interacts with them by binding to uS11.

The enzyme catalyses AMP + ATP = 2 ADP. The catalysed reaction is ATP + H2O = ADP + phosphate + H(+). Its function is as follows. Broad-specificity nucleoside monophosphate (NMP) kinase that catalyzes the reversible transfer of the terminal phosphate group between nucleoside triphosphates and monophosphates. Also has ATPase activity. Involved in the late maturation steps of the 30S ribosomal particles, specifically 16S rRNA maturation. While NMP activity is not required for ribosome maturation, ATPase activity is. Associates transiently with small ribosomal subunit protein uS11. ATP hydrolysis breaks the interaction with uS11. May temporarily remove uS11 from the ribosome to enable a conformational change of the ribosomal RNA that is needed for the final maturation step of the small ribosomal subunit. The protein is Putative adenylate kinase of Archaeoglobus fulgidus (strain ATCC 49558 / DSM 4304 / JCM 9628 / NBRC 100126 / VC-16).